We begin with the raw amino-acid sequence, 254 residues long: Cytochrome c oxidase subunit 2 (254 aa).

Residues 1 to 37 (MNNILNFYPAVITTDVAENWQIGFQDPATPIMEGIIN) are Mitochondrial intermembrane-facing. The chain crosses the membrane as a helical span at residues 38 to 58 (LHYDLMFFICVISVFVSWMLG). The Mitochondrial matrix segment spans residues 59 to 83 (RTLWHFEQNQNKIPSSLTHGTLIEM). The chain crosses the membrane as a helical span at residues 84 to 104 (IWTVTPAFILLIIAVPSFSLL). At 105 to 254 (YAMDEIISPA…VSWISNKLNE (150 aa)) the chain is on the mitochondrial intermembrane side. His186, Cys221, Glu223, Cys225, His229, and Met232 together coordinate Cu cation. Residue Glu223 coordinates Mg(2+).

This sequence belongs to the cytochrome c oxidase subunit 2 family. As to quaternary structure, component of the cytochrome c oxidase (complex IV, CIV), a multisubunit enzyme composed of a catalytic core of 3 subunits and several supernumerary subunits. The complex exists as a monomer or a dimer and forms supercomplexes (SCs) in the inner mitochondrial membrane with ubiquinol-cytochrome c oxidoreductase (cytochrome b-c1 complex, complex III, CIII). It depends on Cu cation as a cofactor.

Its subcellular location is the mitochondrion inner membrane. The catalysed reaction is 4 Fe(II)-[cytochrome c] + O2 + 8 H(+)(in) = 4 Fe(III)-[cytochrome c] + 2 H2O + 4 H(+)(out). Its function is as follows. Component of the cytochrome c oxidase, the last enzyme in the mitochondrial electron transport chain which drives oxidative phosphorylation. The respiratory chain contains 3 multisubunit complexes succinate dehydrogenase (complex II, CII), ubiquinol-cytochrome c oxidoreductase (cytochrome b-c1 complex, complex III, CIII) and cytochrome c oxidase (complex IV, CIV), that cooperate to transfer electrons derived from NADH and succinate to molecular oxygen, creating an electrochemical gradient over the inner membrane that drives transmembrane transport and the ATP synthase. Cytochrome c oxidase is the component of the respiratory chain that catalyzes the reduction of oxygen to water. Electrons originating from reduced cytochrome c in the intermembrane space (IMS) are transferred via the dinuclear copper A center (CU(A)) of subunit 2 and heme A of subunit 1 to the active site in subunit 1, a binuclear center (BNC) formed by heme A3 and copper B (CU(B)). The BNC reduces molecular oxygen to 2 water molecules using 4 electrons from cytochrome c in the IMS and 4 protons from the mitochondrial matrix. The chain is Cytochrome c oxidase subunit 2 (COX2) from Chondrus crispus (Carrageen Irish moss).